A 217-amino-acid chain; its full sequence is GTP cyclohydrolase 1 (217 aa).

Zn(2+) is bound by residues cysteine 109, histidine 112, and cysteine 180.

Belongs to the GTP cyclohydrolase I family. In terms of assembly, toroid-shaped homodecamer, composed of two pentamers of five dimers.

The catalysed reaction is GTP + H2O = 7,8-dihydroneopterin 3'-triphosphate + formate + H(+). Its pathway is cofactor biosynthesis; 7,8-dihydroneopterin triphosphate biosynthesis; 7,8-dihydroneopterin triphosphate from GTP: step 1/1. This chain is GTP cyclohydrolase 1, found in Vibrio vulnificus (strain CMCP6).